The sequence spans 259 residues: Phosphate import ATP-binding protein PstB 1 (259 aa).

One can recognise an ABC transporter domain in the interval 13–254; that stretch reads IETKDVDLFY…PAEKETEDYI (242 aa). 45 to 52 contacts ATP; that stretch reads GPSGCGKS.

It belongs to the ABC transporter superfamily. Phosphate importer (TC 3.A.1.7) family. As to quaternary structure, the complex is composed of two ATP-binding proteins (PstB), two transmembrane proteins (PstC and PstA) and a solute-binding protein (PstS).

Its subcellular location is the cell membrane. It carries out the reaction phosphate(out) + ATP + H2O = ADP + 2 phosphate(in) + H(+). In terms of biological role, part of the ABC transporter complex PstSACB involved in phosphate import. Responsible for energy coupling to the transport system. The polypeptide is Phosphate import ATP-binding protein PstB 1 (Listeria innocua serovar 6a (strain ATCC BAA-680 / CLIP 11262)).